We begin with the raw amino-acid sequence, 157 residues long: Parasitophorous vacuole membrane protein S16 (157 aa).

Residues 1 to 25 (MNIRKFIPSLALMLIFFAFANLVLS) form the signal peptide. The Extracellular portion of the chain corresponds to 26–105 (DANDKAKKPA…DKKTTVNRNL (80 aa)). The segment at 30-74 (KAKKPAGKGSPSTLQTPGSSSGASLHAVGPNQGGLSQGLSGKDSA) is disordered. The segment covering 39–52 (SPSTLQTPGSSSGA) has biased composition (polar residues). The chain crosses the membrane as a helical span at residues 106–126 (IISTAVTNMIMLIILSGIVGF). Over 127-157 (KVKKTKNADDDKGDKDKDKDNTDEGDEGDDS) the chain is Cytoplasmic. The segment at 130 to 157 (KTKNADDDKGDKDKDKDNTDEGDEGDDS) is disordered. The span at 132 to 148 (KNADDDKGDKDKDKDNT) shows a compositional bias: basic and acidic residues.

It is found in the parasitophorous vacuole membrane. The protein localises to the vacuole. Involved in male gametogenesis. Required for exflagellation of male gametocytes. May play a role in parasite transmission in the mosquito. Binds to the mosquito vector midgut. In Plasmodium falciparum (isolate 3D7), this protein is Parasitophorous vacuole membrane protein S16.